A 96-amino-acid polypeptide reads, in one-letter code: Large ribosomal subunit protein eL14 (96 aa).

This sequence belongs to the eukaryotic ribosomal protein eL14 family.

The polypeptide is Large ribosomal subunit protein eL14 (Saccharolobus solfataricus (strain ATCC 35092 / DSM 1617 / JCM 11322 / P2) (Sulfolobus solfataricus)).